A 101-amino-acid polypeptide reads, in one-letter code: uncharacterized protein (101 aa).

Residues 58–80 (VFPSLNIIILMSDALMFFLRSSI) traverse the membrane as a helical segment.

It is found in the membrane. This is an uncharacterized protein from Saccharomyces cerevisiae (strain ATCC 204508 / S288c) (Baker's yeast).